Reading from the N-terminus, the 193-residue chain is Imidazoleglycerol-phosphate dehydratase (193 aa).

Belongs to the imidazoleglycerol-phosphate dehydratase family.

Its subcellular location is the cytoplasm. The catalysed reaction is D-erythro-1-(imidazol-4-yl)glycerol 3-phosphate = 3-(imidazol-4-yl)-2-oxopropyl phosphate + H2O. It functions in the pathway amino-acid biosynthesis; L-histidine biosynthesis; L-histidine from 5-phospho-alpha-D-ribose 1-diphosphate: step 6/9. The polypeptide is Imidazoleglycerol-phosphate dehydratase (Staphylococcus carnosus (strain TM300)).